Here is a 150-residue protein sequence, read N- to C-terminus: uncharacterized protein (150 aa).

A compositionally biased stretch (polar residues) spans 81 to 90 (TTKPSCSFAQ). The segment at 81 to 125 (TTKPSCSFAQPVTPRTREGAGVRGHRRRRRGSLSLIPWKTSNDKQ) is disordered.

This is an uncharacterized protein from Homo sapiens (Human).